Consider the following 287-residue polypeptide: Pyridoxal kinase PdxY (287 aa).

Substrate-binding positions include S10 and 45–46 (TQ). Residues D112, A144, E149, K182, and 209 to 212 (RPLV) each bind ATP. Substrate is bound at residue D224.

This sequence belongs to the pyridoxine kinase family. PdxY subfamily. In terms of assembly, homodimer. The cofactor is Mg(2+).

The enzyme catalyses pyridoxal + ATP = pyridoxal 5'-phosphate + ADP + H(+). Its pathway is cofactor metabolism; pyridoxal 5'-phosphate salvage; pyridoxal 5'-phosphate from pyridoxal: step 1/1. Functionally, pyridoxal kinase involved in the salvage pathway of pyridoxal 5'-phosphate (PLP). Catalyzes the phosphorylation of pyridoxal to PLP. The polypeptide is Pyridoxal kinase PdxY (Escherichia coli O157:H7).